The chain runs to 235 residues: Ribonuclease P protein component 3 (235 aa).

The protein belongs to the eukaryotic/archaeal RNase P protein component 3 family. In terms of assembly, consists of a catalytic RNA component and at least 4-5 protein subunits.

It localises to the cytoplasm. The catalysed reaction is Endonucleolytic cleavage of RNA, removing 5'-extranucleotides from tRNA precursor.. In terms of biological role, part of ribonuclease P, a protein complex that generates mature tRNA molecules by cleaving their 5'-ends. This Haloarcula marismortui (strain ATCC 43049 / DSM 3752 / JCM 8966 / VKM B-1809) (Halobacterium marismortui) protein is Ribonuclease P protein component 3.